The primary structure comprises 127 residues: Transthyretin (127 aa).

Cysteine 10 is subject to Sulfocysteine. Position 15 (lysine 15) interacts with L-thyroxine. Residue glutamate 42 is modified to 4-carboxyglutamate. Glutamate 54 is an L-thyroxine binding site. An N-linked (GlcNAc...) asparagine glycan is attached at asparagine 98. Serine 117 is an L-thyroxine binding site.

It belongs to the transthyretin family. Homotetramer. Dimer of dimers. In the homotetramer, subunits assemble around a central channel that can accommodate two ligand molecules. Interacts with RBP4. In terms of processing, sulfonation of the reactive cysteine Cys-10 enhances the stability of the native conformation of TTR, avoiding misassembly of the protein leading to amyloid formation. As to expression, detected in serum (at protein level).

The protein resides in the secreted. Thyroid hormone-binding protein. Probably transports thyroxine from the bloodstream to the brain. The sequence is that of Transthyretin (TTR) from Oryctolagus cuniculus (Rabbit).